Reading from the N-terminus, the 78-residue chain is Large ribosomal subunit protein bL28 (78 aa).

The protein belongs to the bacterial ribosomal protein bL28 family.

This chain is Large ribosomal subunit protein bL28 (rpmB), found in Treponema pallidum (strain Nichols).